Here is a 1689-residue protein sequence, read N- to C-terminus: Cullin-7 (1689 aa).

Residues 349–422 (RASFASFNTY…HWHMLEILGF (74 aa)) form the CPH domain. The DOC domain occupies 793-972 (PIQIPFFDVF…HTRLFYMVRA (180 aa)). The segment covering 1321-1337 (VAHEDSGREDKSKKEEA) has biased composition (basic and acidic residues). The tract at residues 1321-1371 (VAHEDSGREDKSKKEEAIGEAAAVAMAEEEDQGKKEEGEEEGEGEDEEEER) is disordered. Acidic residues predominate over residues 1358-1370 (GEEEGEGEDEEEE). Lys-1567 is covalently cross-linked (Glycyl lysine isopeptide (Lys-Gly) (interchain with G-Cter in NEDD8)).

This sequence belongs to the cullin family. As to quaternary structure, component of the 3M complex, composed of core components CUL7, CCDC8 and OBSL1. Component of the Cul7-RING(FBXW8) complex consisting of CUL7, RBX1, SKP1 and FBXW8. Within the Cul7-RING(FBXW8) complex interacts with FBXW8 and RBX1, but not with SKP1. Interacts with CUL1 (via the C-terminal domain); the interaction seems to be mediated by FBXW8; it is likely specific to FBXW8, but not other F-box proteins. Interacts (via the CPH domain) with p53/TP53; the interaction preferentially involves tetrameric and dimeric p53/TP53; this interaction recruits p53/TP53 for ubiquitination by neddylated CUL1-RBX1. The CUL7-CUL9 heterodimer seems to interact specifically with p53/TP53. Interacts with FBXW8; interaction is mutually exclusive of binding to CUL9 or p53/TP53. Interacts with CUL9; leading to inhibited CUL9 activity. Interacts with OBSL1. Interacts (as part of the 3M complex) with HDAC4 and HDAC5; it is negatively regulated by ANKRA2.

It localises to the cytoplasm. The protein resides in the cytoskeleton. It is found in the microtubule organizing center. The protein localises to the centrosome. Its subcellular location is the perinuclear region. It localises to the golgi apparatus. The protein operates within protein modification; protein ubiquitination. Functionally, core component of the 3M and Cul7-RING(FBXW8) complexes, which mediate the ubiquitination and subsequent proteasomal degradation of target proteins. Core component of the 3M complex, a complex required to regulate microtubule dynamics and genome integrity. It is unclear how the 3M complex regulates microtubules, it could act by controlling the level of a microtubule stabilizer. The Cul7-RING(FBXW8) complex alone lacks ubiquitination activity and does not promote polyubiquitination and proteasomal degradation of p53/TP53. However it mediates recruitment of p53/TP53 for ubiquitination by neddylated CUL1-RBX1. Interaction with CUL9 is required to inhibit CUL9 activity and ubiquitination of BIRC5. The Cul7-RING(FBXW8) complex also mediates ubiquitination and consequent degradation of target proteins such as GORASP1, IRS1 and MAP4K1/HPK1. Ubiquitination of GORASP1 regulates Golgi morphogenesis and dendrite patterning in brain. Mediates ubiquitination and degradation of IRS1 in a mTOR-dependent manner: the Cul7-RING(FBXW8) complex recognizes and binds IRS1 previously phosphorylated by S6 kinase (RPS6KB1 or RPS6KB2). The Cul7-RING(FBXW8) complex also mediates ubiquitination of MAP4K1/HPK1: recognizes and binds autophosphorylated MAP4K1/HPK1, leading to its degradation, thereby affecting cell proliferation and differentiation. Acts as a regulator in trophoblast cell epithelial-mesenchymal transition and placental development. While the Cul7-RING(FBXW8) and the 3M complexes are associated and involved in common processes, CUL7 and the Cul7-RING(FBXW8) complex may have additional functions. Probably plays a role in the degradation of proteins involved in endothelial proliferation and/or differentiation. In Mus musculus (Mouse), this protein is Cullin-7 (Cul7).